Here is a 1432-residue protein sequence, read N- to C-terminus: Probable ATP-dependent RNA helicase spindle-E (1432 aa).

The region spanning 125-292 is the Helicase ATP-binding domain; sequence MKAIRENTVV…FATKNGIPPV (168 aa). 138 to 145 is an ATP binding site; the sequence is GETGCGKT. The DEAH box signature appears at 238–241; sequence DEVH. A Helicase C-terminal domain is found at 342–525; it reads VIDNMERRTE…SSVLKAKELN (184 aa). Residues 936-999 enclose the Tudor domain; it reads AGSITKNLKL…RFMSNQLKRE (64 aa).

It belongs to the DEAD box helicase family. DEAH subfamily.

The protein resides in the cytoplasm. The catalysed reaction is ATP + H2O = ADP + phosphate + H(+). Functionally, probable ATP-binding RNA helicase which plays a central role during spermatogenesis and oogenesis by repressing transposable elements and preventing their mobilization, which is essential for the germline integrity. Acts via the piRNA metabolic process, which mediates the repression of transposable elements during meiosis by forming complexes composed of piRNAs and Piwi and govern the methylation and subsequent repression of transposons. Involved in the repression of LTR retrotransposon copia. Also involved in telomere regulation by repressing specialized telomeric retroelements HeT-A, TAHRE, and TART; Drosophila telomeres being maintained by transposition of specialized telomeric retroelements. Involved in telomeric trans-silencing, a repression mechanism by which a transposon or a transgene inserted in subtelomeric heterochromatin has the capacity to repress in trans in the female germline, a homologous transposon, or transgene located in euchromatin. Involved in the repression of testis-expressed Stellate genes by the homologous Su(Ste) repeats. Required for anteroposterior and dorsoventral axis formation during oogenesis. The chain is Probable ATP-dependent RNA helicase spindle-E (spn-E) from Drosophila willistoni (Fruit fly).